Consider the following 448-residue polypeptide: Phosphoglucosamine mutase (448 aa).

The active-site Phosphoserine intermediate is the serine 100. 4 residues coordinate Mg(2+): serine 100, aspartate 240, aspartate 242, and aspartate 244. Position 100 is a phosphoserine (serine 100).

It belongs to the phosphohexose mutase family. Mg(2+) serves as cofactor. In terms of processing, activated by phosphorylation.

The catalysed reaction is alpha-D-glucosamine 1-phosphate = D-glucosamine 6-phosphate. Functionally, catalyzes the conversion of glucosamine-6-phosphate to glucosamine-1-phosphate. This is Phosphoglucosamine mutase from Clostridioides difficile (strain 630) (Peptoclostridium difficile).